The sequence spans 417 residues: Probable secreted aspartic protease ARB_07536 (417 aa).

The signal sequence occupies residues 1–20 (MRGILILVALGAATIPQASA). The 372-residue stretch at 42–413 (NTDLVTIGTP…DFEKNRVGLA (372 aa)) folds into the Peptidase A1 domain. Residues N74, N91, N100, N170, N276, and N314 are each glycosylated (N-linked (GlcNAc...) asparagine). A disulfide bridge links C333 with C373.

This sequence belongs to the peptidase A1 family.

It is found in the secreted. Probable secreted aspartic protease that supplies the fungus with nutrient amino acids. May be able to degrade the selected host's proteins involved in the immune defense. The sequence is that of Probable secreted aspartic protease ARB_07536 from Arthroderma benhamiae (strain ATCC MYA-4681 / CBS 112371) (Trichophyton mentagrophytes).